The chain runs to 246 residues: ATP synthase subunit a, chloroplastic (246 aa).

5 consecutive transmembrane segments (helical) span residues 33–53 (VHGQ…GFGL), 99–119 (TIFL…WALI), 133–153 (INTT…AGIN), 201–221 (GVLV…LGLF), and 222–242 (TSAI…GESL).

This sequence belongs to the ATPase A chain family. F-type ATPases have 2 components, CF(1) - the catalytic core - and CF(0) - the membrane proton channel. CF(1) has five subunits: alpha(3), beta(3), gamma(1), delta(1), epsilon(1). CF(0) has four main subunits: a, b, b' and c.

It localises to the plastid. Its subcellular location is the chloroplast thylakoid membrane. In terms of biological role, key component of the proton channel; it plays a direct role in the translocation of protons across the membrane. This chain is ATP synthase subunit a, chloroplastic, found in Oltmannsiellopsis viridis (Marine flagellate).